We begin with the raw amino-acid sequence, 197 residues long: 22.7 kDa class IV heat shock protein (197 aa).

An N-terminal signal peptide occupies residues 1–28 (MSLKPLNMLLVPFLLLILAADFPLKAKA). The region spanning 68–184 (PSITLSHARV…GPRMVSIVEE (117 aa)) is the sHSP domain. The Prevents secretion from ER motif lies at 194-197 (DELK).

Belongs to the small heat shock protein (HSP20) family. As to quaternary structure, forms oligomeric structures.

It localises to the endoplasmic reticulum lumen. This chain is 22.7 kDa class IV heat shock protein (HSP22.7), found in Pisum sativum (Garden pea).